We begin with the raw amino-acid sequence, 102 residues long: ATP-dependent Clp protease adapter protein ClpS (102 aa).

This sequence belongs to the ClpS family. In terms of assembly, binds to the N-terminal domain of the chaperone ClpA.

Functionally, involved in the modulation of the specificity of the ClpAP-mediated ATP-dependent protein degradation. This is ATP-dependent Clp protease adapter protein ClpS from Shewanella sediminis (strain HAW-EB3).